We begin with the raw amino-acid sequence, 219 residues long: 7-cyano-7-deazaguanine synthase (219 aa).

9–19 (YSGGMDSFTVL) contacts ATP. Residues cysteine 185, cysteine 193, cysteine 196, and cysteine 199 each coordinate Zn(2+).

This sequence belongs to the QueC family. Requires Zn(2+) as cofactor.

The catalysed reaction is 7-carboxy-7-deazaguanine + NH4(+) + ATP = 7-cyano-7-deazaguanine + ADP + phosphate + H2O + H(+). It functions in the pathway purine metabolism; 7-cyano-7-deazaguanine biosynthesis. Functionally, catalyzes the ATP-dependent conversion of 7-carboxy-7-deazaguanine (CDG) to 7-cyano-7-deazaguanine (preQ(0)). The protein is 7-cyano-7-deazaguanine synthase of Marinomonas sp. (strain MWYL1).